The following is a 629-amino-acid chain: MLLSELSHPNQLHGLTVSQLEEIACQIRERHLQVVSTSGGHLGPGLGVVELTLALYQTLDLDFDKVVWDVGHQGYPHKLITGRFSQFDSLRQQNGVAGYLKRSESKFDHFGAGHASTSISAALGMAIARDRKGDNYKCVAVIGDGALTGGMALEAINHAGHLPNTPLVVVLNDNDMSISPPVGALSSYLNKVRVSPPLQFLSDSVQESVKNIPLIGKDIPEELKNIKGSVRRLSVPKVGAVFEELGFTYMGPIDGHDIGNLVKTFNAAHKLKRPVLVHVVTTKGKGYPYAEADQVGYHAQSAFDLTTGKSIPSKKPKPVSYSKIFGQTLLKICEQDSKVVGITAAMATGTGLDILQKNIPDQYIDVGIAEQHAVTLAAGMSCDGLKPVVAIYSTFLQRAFDQLIHDVGIQNLPVSFVLDRAGIVGADGPTHQGQYDISYMRSIPNFVLMAPKDESELQRMLITSINHNGPTALRIPRGSGLGVAIMDEGWEPLNIGEAEIIEGGEDILIIAYGSMVASAIETAKILKNMNINACIVNARFVKPLDKNLIMPLASRIQKVVTMEEGTLIGGFGSAIVELFNDNEINIPVYRIGIPDVLVDHASPDQSKEKLGLMPDQMADNIVKKFKLVN.

Residues histidine 72 and 113 to 115 (GHA) each bind thiamine diphosphate. Aspartate 144 contacts Mg(2+). Thiamine diphosphate contacts are provided by residues 145 to 146 (GA), asparagine 174, tyrosine 287, and glutamate 370. Asparagine 174 is a binding site for Mg(2+).

This sequence belongs to the transketolase family. DXPS subfamily. As to quaternary structure, homodimer. Mg(2+) is required as a cofactor. Requires thiamine diphosphate as cofactor.

The catalysed reaction is D-glyceraldehyde 3-phosphate + pyruvate + H(+) = 1-deoxy-D-xylulose 5-phosphate + CO2. It participates in metabolic intermediate biosynthesis; 1-deoxy-D-xylulose 5-phosphate biosynthesis; 1-deoxy-D-xylulose 5-phosphate from D-glyceraldehyde 3-phosphate and pyruvate: step 1/1. Functionally, catalyzes the acyloin condensation reaction between C atoms 2 and 3 of pyruvate and glyceraldehyde 3-phosphate to yield 1-deoxy-D-xylulose-5-phosphate (DXP). This is 1-deoxy-D-xylulose-5-phosphate synthase from Prochlorococcus marinus (strain MIT 9301).